The sequence spans 40 residues: Snaclec tokaracetin subunit beta (40 aa).

Cysteines 2 and 13 form a disulfide. One can recognise a C-type lectin domain in the interval 9–40 (YDEHCYRVFQQKMNWEDAEKFCTQQHKGXHLX).

Belongs to the snaclec family. In terms of assembly, heterodimer of subunits alpha and beta; disulfide-linked. As to expression, expressed by the venom gland.

It is found in the secreted. Platelet antagonist that specifically and reversibly binds to a site on platelet glycoprotein Ibalpha (GP1BA) close to or identical with the site for vWF binding. It inhibits the binding of vWF to platelets and vWF-dependent shear-induced platelet aggregation. This Protobothrops tokarensis (Tokara habu) protein is Snaclec tokaracetin subunit beta.